A 231-amino-acid polypeptide reads, in one-letter code: 7-cyano-7-deazaguanine synthase (231 aa).

F17–L27 serves as a coordination point for ATP. Zn(2+) is bound by residues C193, C201, C204, and C207.

This sequence belongs to the QueC family. Requires Zn(2+) as cofactor.

The catalysed reaction is 7-carboxy-7-deazaguanine + NH4(+) + ATP = 7-cyano-7-deazaguanine + ADP + phosphate + H2O + H(+). The protein operates within purine metabolism; 7-cyano-7-deazaguanine biosynthesis. Functionally, catalyzes the ATP-dependent conversion of 7-carboxy-7-deazaguanine (CDG) to 7-cyano-7-deazaguanine (preQ(0)). The sequence is that of 7-cyano-7-deazaguanine synthase from Hahella chejuensis (strain KCTC 2396).